The following is a 211-amino-acid chain: Probable GTP-binding protein EngB (211 aa).

The EngB-type G domain occupies 21-197 (TAPEFAFLGR…WGEIHRVAAE (177 aa)). GTP contacts are provided by residues 29–36 (GRSNVGKS), 55–59 (GRTRA), 80–83 (DLPG), 147–150 (TKAD), and 176–178 (CSA). Positions 36 and 57 each coordinate Mg(2+).

The protein belongs to the TRAFAC class TrmE-Era-EngA-EngB-Septin-like GTPase superfamily. EngB GTPase family. Requires Mg(2+) as cofactor.

Functionally, necessary for normal cell division and for the maintenance of normal septation. This Acidobacterium capsulatum (strain ATCC 51196 / DSM 11244 / BCRC 80197 / JCM 7670 / NBRC 15755 / NCIMB 13165 / 161) protein is Probable GTP-binding protein EngB.